A 475-amino-acid chain; its full sequence is Ribulose bisphosphate carboxylase large chain (475 aa).

Positions 1–2 (MS) are excised as a propeptide. The residue at position 3 (Pro3) is an N-acetylproline. Residue Lys14 is modified to N6,N6,N6-trimethyllysine. Residues Asn123 and Thr173 each contribute to the substrate site. Residue Lys175 is the Proton acceptor of the active site. Residue Lys177 participates in substrate binding. Mg(2+) is bound by residues Lys201, Asp203, and Glu204. Lys201 is modified (N6-carboxylysine). His294 serves as the catalytic Proton acceptor. Substrate-binding residues include Arg295, His327, and Ser379.

The protein belongs to the RuBisCO large chain family. Type I subfamily. Heterohexadecamer of 8 large chains and 8 small chains; disulfide-linked. The disulfide link is formed within the large subunit homodimers. Mg(2+) is required as a cofactor. Post-translationally, the disulfide bond which can form in the large chain dimeric partners within the hexadecamer appears to be associated with oxidative stress and protein turnover.

It localises to the plastid. The protein resides in the chloroplast. It catalyses the reaction 2 (2R)-3-phosphoglycerate + 2 H(+) = D-ribulose 1,5-bisphosphate + CO2 + H2O. The catalysed reaction is D-ribulose 1,5-bisphosphate + O2 = 2-phosphoglycolate + (2R)-3-phosphoglycerate + 2 H(+). Functionally, ruBisCO catalyzes two reactions: the carboxylation of D-ribulose 1,5-bisphosphate, the primary event in carbon dioxide fixation, as well as the oxidative fragmentation of the pentose substrate in the photorespiration process. Both reactions occur simultaneously and in competition at the same active site. The polypeptide is Ribulose bisphosphate carboxylase large chain (Magnolia acuminata (Cucumber tree)).